We begin with the raw amino-acid sequence, 360 residues long: Phospho-N-acetylmuramoyl-pentapeptide-transferase (360 aa).

10 consecutive transmembrane segments (helical) span residues 25–45 (RGIL…PWMI), 73–93 (TMGG…WADL), 97–117 (YVWV…VDDY), 142–162 (VGAA…TLII), 168–188 (ASIP…VGSS), 199–219 (GLAI…CYLS), 236–256 (AGEL…FLWF), 263–283 (VFMG…IAVI), 288–308 (IVLF…VIQV), and 338–358 (VIVR…ATLK).

The protein belongs to the glycosyltransferase 4 family. MraY subfamily. Mg(2+) serves as cofactor.

Its subcellular location is the cell inner membrane. The catalysed reaction is UDP-N-acetyl-alpha-D-muramoyl-L-alanyl-gamma-D-glutamyl-meso-2,6-diaminopimeloyl-D-alanyl-D-alanine + di-trans,octa-cis-undecaprenyl phosphate = di-trans,octa-cis-undecaprenyl diphospho-N-acetyl-alpha-D-muramoyl-L-alanyl-D-glutamyl-meso-2,6-diaminopimeloyl-D-alanyl-D-alanine + UMP. Its pathway is cell wall biogenesis; peptidoglycan biosynthesis. Functionally, catalyzes the initial step of the lipid cycle reactions in the biosynthesis of the cell wall peptidoglycan: transfers peptidoglycan precursor phospho-MurNAc-pentapeptide from UDP-MurNAc-pentapeptide onto the lipid carrier undecaprenyl phosphate, yielding undecaprenyl-pyrophosphoryl-MurNAc-pentapeptide, known as lipid I. The polypeptide is Phospho-N-acetylmuramoyl-pentapeptide-transferase (Pseudomonas fluorescens (strain SBW25)).